Here is a 55-residue protein sequence, read N- to C-terminus: ATP synthase protein 8 (55 aa).

The helical transmembrane segment at 8–28 (WWIVNFSLIWASVLIVISLLL) threads the bilayer. The segment at 34–55 (NSAGQSSSSLTLNKTTTNWQWL) is disordered. The segment covering 39–55 (SSSSLTLNKTTTNWQWL) has biased composition (low complexity).

This sequence belongs to the ATPase protein 8 family. As to quaternary structure, F-type ATPases have 2 components, CF(1) - the catalytic core - and CF(0) - the membrane proton channel.

The protein resides in the mitochondrion membrane. Mitochondrial membrane ATP synthase (F(1)F(0) ATP synthase or Complex V) produces ATP from ADP in the presence of a proton gradient across the membrane which is generated by electron transport complexes of the respiratory chain. F-type ATPases consist of two structural domains, F(1) - containing the extramembraneous catalytic core and F(0) - containing the membrane proton channel, linked together by a central stalk and a peripheral stalk. During catalysis, ATP synthesis in the catalytic domain of F(1) is coupled via a rotary mechanism of the central stalk subunits to proton translocation. Part of the complex F(0) domain. Minor subunit located with subunit a in the membrane. The sequence is that of ATP synthase protein 8 (MT-ATP8) from Strongylocentrotus purpuratus (Purple sea urchin).